Consider the following 579-residue polypeptide: uncharacterized protein (579 aa).

Residues 1–100 form a disordered region; the sequence is MSGRRRNHPG…APPCGPYPGE (100 aa). Polar residues predominate over residues 80–90; the sequence is GQQQSEPQHNS. 11 consecutive transmembrane segments (helical) span residues 148 to 168, 175 to 195, 206 to 226, 228 to 248, 279 to 299, 303 to 323, 378 to 398, 407 to 427, 448 to 468, 504 to 524, and 526 to 546; these read FAVD…AAAS, VALY…LIGP, VALA…IMNY, GATG…MMVL, VFGL…VEFV, LFKL…GALL, LWGN…PAFV, WVQL…NFAG, IAVT…MTTI, SEST…MVYT, and LWVG…QTVV.

This sequence to M.tuberculosis Rv0876c.

It is found in the cell membrane. This is an uncharacterized protein from Mycobacterium leprae (strain TN).